Here is a 373-residue protein sequence, read N- to C-terminus: Alpha-N-acetylgalactosaminide alpha-2,6-sialyltransferase 2 (373 aa).

The Cytoplasmic segment spans residues 1–6; that stretch reads MDLPRR. The helical; Signal-anchor for type II membrane protein transmembrane segment at 7 to 27 threads the bilayer; it reads WLFRMLLLVATSSGILLMLYS. The Lumenal segment spans residues 28–373; it reads SAGQQSPETQ…NAGILWLYQR (346 aa). Cystine bridges form between Cys-65-Cys-147 and Cys-150-Cys-316. An N-linked (GlcNAc...) asparagine glycan is attached at Asn-103. Asn-155 is a binding site for CMP-N-acetyl-beta-neuraminate. Asn-160 is a glycosylation site (N-linked (GlcNAc...) asparagine). 3 residues coordinate CMP-N-acetyl-beta-neuraminate: Asn-178, Ser-303, and His-335.

The protein belongs to the glycosyltransferase 29 family. Highly expressed in lactating mammary gland and adult testis. Lower levels in kidney.

It is found in the golgi apparatus membrane. It carries out the reaction a beta-D-galactosyl-(1-&gt;3)-N-acetyl-alpha-D-galactosaminyl derivative + CMP-N-acetyl-beta-neuraminate = a beta-D-galactosyl-(1-&gt;3)-[N-acetyl-alpha-neuraminyl-(2-&gt;6)]-N-acetyl-alpha-D-galactosaminyl derivative + CMP + H(+). It catalyses the reaction a 3-O-[N-acetyl-alpha-D-galactosaminyl]-L-threonyl-[protein] + CMP-N-acetyl-beta-neuraminate = a 3-O-[N-acetyl-alpha-neuraminosyl-(2-&gt;6)-N-acetyl-alpha-D-galactosaminyl]-L-threonyl-[protein] + CMP + H(+). The catalysed reaction is a 3-O-[N-acetyl-alpha-neuraminyl-(2-&gt;3)-beta-D-galactosyl-(1-&gt;3)-N-acetyl-alpha-D-galactosaminyl]-L-threonyl-[protein] + CMP-N-acetyl-beta-neuraminate = a 3-O-{alpha-Neu5Ac-(2-&gt;3)-beta-D-Gal-(1-&gt;3)-[alpha-Neu5Ac-(2-&gt;6)]-alpha-D-GalNAc}-L-threonyl-[protein] + CMP + H(+). It participates in protein modification; protein glycosylation. Catalyzes the transfer of N-acetylneuraminyl groups onto glycan chains in glycoproteins. Conjugates sialic acid with an alpha-2-6 linkage to N-acetylgalactosamine (GalNAc) glycan chains linked to serine or threonine in glycoproteins. Sialylates alphaGalNAc- and Galbeta1-&gt;3GalNAc-O-Ser/Thr epitopes also known as Tn and T antigens. The sequence is that of Alpha-N-acetylgalactosaminide alpha-2,6-sialyltransferase 2 (St6galnac2) from Mus musculus (Mouse).